The sequence spans 412 residues: Multifunctional CCA protein (412 aa).

Residues Gly8 and Arg11 each contribute to the ATP site. CTP contacts are provided by Gly8 and Arg11. 2 residues coordinate Mg(2+): Glu21 and Asp23. The ATP site is built by Arg91, Arg137, and Arg140. Residues Arg91, Arg137, and Arg140 each contribute to the CTP site. In terms of domain architecture, HD spans 228-329 (CGIHTLMSLQ…WRLLQRLDVL (102 aa)).

This sequence belongs to the tRNA nucleotidyltransferase/poly(A) polymerase family. Bacterial CCA-adding enzyme type 1 subfamily. Monomer. Can also form homodimers and oligomers. Mg(2+) is required as a cofactor. Ni(2+) serves as cofactor.

It carries out the reaction a tRNA precursor + 2 CTP + ATP = a tRNA with a 3' CCA end + 3 diphosphate. The enzyme catalyses a tRNA with a 3' CCA end + 2 CTP + ATP = a tRNA with a 3' CCACCA end + 3 diphosphate. Its function is as follows. Catalyzes the addition and repair of the essential 3'-terminal CCA sequence in tRNAs without using a nucleic acid template. Adds these three nucleotides in the order of C, C, and A to the tRNA nucleotide-73, using CTP and ATP as substrates and producing inorganic pyrophosphate. tRNA 3'-terminal CCA addition is required both for tRNA processing and repair. Also involved in tRNA surveillance by mediating tandem CCA addition to generate a CCACCA at the 3' terminus of unstable tRNAs. While stable tRNAs receive only 3'-terminal CCA, unstable tRNAs are marked with CCACCA and rapidly degraded. The protein is Multifunctional CCA protein of Acinetobacter baumannii (strain ATCC 17978 / DSM 105126 / CIP 53.77 / LMG 1025 / NCDC KC755 / 5377).